Here is a 756-residue protein sequence, read N- to C-terminus: Anaphase-promoting complex subunit 5 (756 aa).

TPR repeat units lie at residues 301–334 (RYAA…AQES), 522–555 (DGRY…KAQN), 581–614 (ISVL…SREY), and 678–711 (YSQQ…EQLR).

It belongs to the APC5 family. In terms of assembly, the APC/C is composed of at least 12 subunits.

The protein localises to the nucleus. The protein resides in the cytoplasm. It is found in the cytoskeleton. Its subcellular location is the spindle. It participates in protein modification; protein ubiquitination. Component of the anaphase promoting complex/cyclosome (APC/C), a cell cycle-regulated E3 ubiquitin ligase that controls progression through mitosis and the G1 phase of the cell cycle. The APC/C complex acts by mediating ubiquitination and subsequent degradation of target proteins: it mainly mediates the formation of 'Lys-11'-linked polyubiquitin chains and, to a lower extent, the formation of 'Lys-48'- and 'Lys-63'-linked polyubiquitin chains. The APC/C complex catalyzes assembly of branched 'Lys-11'-/'Lys-48'-linked branched ubiquitin chains on target proteins. The protein is Anaphase-promoting complex subunit 5 (ANAPC5) of Gallus gallus (Chicken).